The following is a 560-amino-acid chain: Arginine--tRNA ligase (560 aa).

The 'HIGH' region motif lies at 164–174 (FYYNDAGNQID).

Belongs to the class-I aminoacyl-tRNA synthetase family. In terms of assembly, monomer.

The protein resides in the cytoplasm. It catalyses the reaction tRNA(Arg) + L-arginine + ATP = L-arginyl-tRNA(Arg) + AMP + diphosphate. This is Arginine--tRNA ligase from Bordetella pertussis (strain Tohama I / ATCC BAA-589 / NCTC 13251).